The chain runs to 66 residues: Large ribosomal subunit protein uL29 (66 aa).

The protein belongs to the universal ribosomal protein uL29 family.

In Thermococcus sibiricus (strain DSM 12597 / MM 739), this protein is Large ribosomal subunit protein uL29.